Consider the following 2813-residue polypeptide: A-kinase anchor protein 13 (2813 aa).

Disordered stretches follow at residues 304 to 400 and 415 to 439; these read AQDP…QDSC and LSSC…QESL. The span at 427–439 shows a compositional bias: polar residues; the sequence is TKSSGMPTDQESL. Residues 494 to 516 form an important for interaction with PRKAR2A region; that stretch reads WKNVLQGGESTKERFENSNIGTA. 3 disordered regions span residues 539 to 585, 632 to 653, and 690 to 726; these read AASS…VDQN, HQNS…SPIC, and SEST…RDTQ. Residues 561–577 are compositionally biased toward basic and acidic residues; that stretch reads STEKTAETETSRSREES. Residues 690-702 show a composition bias toward polar residues; it reads SESTTARQPSSQD. Ser790 carries the post-translational modification Phosphoserine. 2 disordered regions span residues 805-856 and 939-965; these read VPSQ…AAEL and ENAL…QFHE. Thr815 carries the post-translational modification Phosphothreonine. Positions 835–844 are enriched in basic and acidic residues; the sequence is PDTRPLEDRA. Polar residues-rich tracts occupy residues 847-856 and 939-948; these read LSTSSTAAEL and ENALSSGTLQ. Residue Thr953 is modified to Phosphothreonine. Residue Ser983 is modified to Phosphoserine. Disordered stretches follow at residues 1431–1455 and 1467–1542; these read GVLK…DSII and DITG…DSIT. Residues 1467–1478 are compositionally biased toward low complexity; sequence DITGSSSSTDDT. Over residues 1488 to 1497 the composition is skewed to polar residues; sequence GSDVSLSQIL. Phosphoserine is present on residues Ser1489, Ser1507, Ser1540, Ser1565, and Ser1602. Positions 1525–1540 are enriched in acidic residues; the sequence is SEPADPGDVEEEEMDS. The segment at 1585–1715 is important for interaction with MAP2K3; sequence RVLGDVVRRP…HSTFHNTSAN (131 aa). Residues 1601-1638 form a disordered region; the sequence is FSLEGLTGGAGVGNKPSSSLEVSSANAEELRHPFSGEE. A compositionally biased stretch (polar residues) spans 1615 to 1626; that stretch reads KPSSSLEVSSAN. Over residues 1628–1638 the composition is skewed to basic and acidic residues; that stretch reads EELRHPFSGEE. 3 positions are modified to phosphoserine: Ser1642, Ser1645, and Ser1647. Lys1670 is modified (N6-methyllysine). A disordered region spans residues 1755 to 1793; it reads KMSSSKKSKEKEKEKDKIKEKEKDSKDKEKDKKTVNGHT. The stretch at 1758 to 1790 forms a coiled coil; sequence SSKKSKEKEKEKDKIKEKEKDSKDKEKDKKTVN. Positions 1761-1788 are enriched in basic and acidic residues; sequence KSKEKEKEKDKIKEKEKDSKDKEKDKKT. Residues 1791–1838 form a Phorbol-ester/DAG-type zinc finger; it reads GHTFSSIPVVGPISCSQCMKPFTNKDAYTCANCSAFVHKGCRESLASC. 3 positions are modified to phosphoserine: Ser1876, Ser1895, and Ser1929. The interaction with ESR1 stretch occupies residues 1919–2813; that stretch reads MSNTWKFLSH…VSAEGEEIFC (895 aa). Residue Thr1930 is modified to Phosphothreonine. 2 positions are modified to phosphoserine: Ser1932 and Ser1945. A DH domain is found at 1994 to 2191; sequence KRQEVIYELM…KDVIGAVDSK (198 aa). In terms of domain architecture, PH spans 2231–2333; that stretch reads KLVRDGSVFL…WIQIIQDTIN (103 aa). A phosphoserine mark is found at Ser2345 and Ser2398. The stretch at 2345-2381 forms a coiled coil; that stretch reads SENEEEKKMLDTRARELKEQLHQKDQKILLLLEEKEM. The tract at residues 2466 to 2502 is disordered; that stretch reads ETFGGFDSHQMNASKGGEKEEGDDGQDLRRTESDSGL. At Thr2467 the chain carries Phosphothreonine. Ser2473 is subject to Phosphoserine. Residues 2491–2502 show a composition bias toward basic and acidic residues; that stretch reads QDLRRTESDSGL. Ser2563 and Ser2566 each carry phosphoserine. Positions 2568–2683 form a coiled coil; sequence LIEQEKQRSL…RLSQRQTERD (116 aa). Basic and acidic residues predominate over residues 2665-2684; that stretch reads QEQLRREAERLSQRQTERDL. Residues 2665-2813 are disordered; sequence QEQLRREAER…VSAEGEEIFC (149 aa). Phosphoserine occurs at positions 2703, 2709, and 2728. Positions 2720 to 2735 are enriched in polar residues; that stretch reads SLDSELSVSPKRNSIS. Over residues 2760 to 2771 the composition is skewed to low complexity; it reads QSQAPASTSAST.

As to quaternary structure, interacts with the cAMP-dependent protein kinase (PKA) holoenzyme and with the regulatory subunit PRKAR2A. Interacts with RHOA. Also interacts with RHOB and RHOC. Identified in a ternary complex with RHOA and PRKAR2A. Identified in a complex with NR3C1 and RHOA. Interacts with BRAF and KSR1. Identified in a complex with BRAF and KSR1. Component of a signaling complex containing at least AKAP13, PKN1, MAPK14, ZAK and MAP2K3. Within this complex, AKAP13 interacts directly with PKN1, which in turn recruits MAPK14, MAP2K3 and ZAK. Interacts (phosphorylated form) with YWHAB and YWHAZ. Interaction with YWHAB inhibits activation of RHOA, interferes with PKN1 binding and activation of MAP kinases. Interacts with GNA12. Interacts with IKBKB. Interacts with ESR1, THRA, PPARA and NME2. Interacts (via the C-terminal domain after the PH domain) with MEF2C and RXRB. Interacts (via the C-terminal domain after the PH domain) with PRKD1. In terms of tissue distribution, detected in mammary gland. Detected in heart (at protein level). Expressed as a 5.3 kb transcript in hematopoietic cells, skeletal muscle, lung, heart, estrogen-responsive reproductive tissues, including breast ductal epithelium. Also found in testis and breast cancer cell lines. Predominantly expressed as a 10 kb transcript in the heart and at lower levels in the lung, placenta, kidney, pancreas, skeletal muscle and liver. Transcripts of between 6-9 kb are also expressed in myeloid and lymphoid lineages, a variety of epithelial tissues, and in skeletal muscle.

It localises to the cytoplasm. The protein resides in the cytosol. It is found in the cell cortex. The protein localises to the nucleus. Its subcellular location is the membrane. Scaffold protein that plays an important role in assembling signaling complexes downstream of several types of G protein-coupled receptors. Activates RHOA in response to signaling via G protein-coupled receptors via its function as Rho guanine nucleotide exchange factor. May also activate other Rho family members. Part of a kinase signaling complex that links ADRA1A and ADRA1B adrenergic receptor signaling to the activation of downstream p38 MAP kinases, such as MAPK11 and MAPK14. Part of a signaling complex that links ADRA1B signaling to the activation of RHOA and IKBKB/IKKB, leading to increased NF-kappa-B transcriptional activity. Part of a RHOA-dependent signaling cascade that mediates responses to lysophosphatidic acid (LPA), a signaling molecule that activates G-protein coupled receptors and potentiates transcriptional activation of the glucocorticoid receptor NR3C1. Part of a signaling cascade that stimulates MEF2C-dependent gene expression in response to lysophosphatidic acid (LPA). Part of a signaling pathway that activates MAPK11 and/or MAPK14 and leads to increased transcription activation of the estrogen receptors ESR1 and ESR2. Part of a signaling cascade that links cAMP and EGFR signaling to BRAF signaling and to PKA-mediated phosphorylation of KSR1, leading to the activation of downstream MAP kinases, such as MAPK1 or MAPK3. Functions as a scaffold protein that anchors cAMP-dependent protein kinase (PKA) and PRKD1. This promotes activation of PRKD1, leading to increased phosphorylation of HDAC5 and ultimately cardiomyocyte hypertrophy. Has no guanine nucleotide exchange activity on CDC42, Ras or Rac. Required for normal embryonic heart development, and in particular for normal sarcomere formation in the developing cardiomyocytes. Plays a role in cardiomyocyte growth and cardiac hypertrophy in response to activation of the beta-adrenergic receptor by phenylephrine or isoproterenol. Required for normal adaptive cardiac hypertrophy in response to pressure overload. Plays a role in osteogenesis. This Homo sapiens (Human) protein is A-kinase anchor protein 13 (AKAP13).